The chain runs to 1311 residues: Kinase and exchange factor for Rac A (1311 aa).

Residues 18–316 enclose the Protein kinase domain; it reads LVFKDIIGKG…STIVTILESI (299 aa). Residues 24 to 32 and lysine 45 contribute to the ATP site; that span reads IGKGNFGCV. Catalysis depends on aspartate 138, which acts as the Proton acceptor. 3 disordered regions span residues 169-201, 360-426, and 446-471; these read NGSD…KNNG, QQQS…TTTT, and PLSK…LIGS. Over residues 451-471 the composition is skewed to low complexity; it reads QQQQQRNQNSSIIDNNSLIGS. The IQ domain maps to 650–679; that stretch reads ELNLIIKLQSRIRGWLVRRRYKIFLSNWKL. The region spanning 691–927 is the DH domain; it reads QWIRLFNQLI…RETSNYIQSQ (237 aa). Composition is skewed to low complexity over residues 994–1021 and 1031–1044; these read SKYN…TNSN and STSN…GNNN. Disordered regions lie at residues 994 to 1044, 1114 to 1145, and 1208 to 1311; these read SKYN…GNNN, NNPN…NGSI, and GTST…FSKD. The segment covering 1117 to 1137 has biased composition (gly residues); the sequence is NGGGSNNNSIGGGGGGRGGSG. Residues 1208–1229 show a composition bias toward polar residues; the sequence is GTSTPERKTSLVNMSPSTTSSL. The span at 1230-1245 shows a compositional bias: low complexity; it reads NNIDSNYNNNNNNVTN. Polar residues predominate over residues 1246–1257; sequence TPIKSVTSSPSI. Residues 1263–1276 are compositionally biased toward low complexity; that stretch reads NDNNQQPQLPSQPN. A compositionally biased stretch (polar residues) spans 1277-1287; it reads EEFQFTVPTTP. The segment covering 1290–1303 has biased composition (basic residues); it reads KKKKRGSFSSKLKR.

Belongs to the protein kinase superfamily. TKL Ser/Thr protein kinase family. The cofactor is Mg(2+).

The catalysed reaction is L-seryl-[protein] + ATP = O-phospho-L-seryl-[protein] + ADP + H(+). It carries out the reaction L-threonyl-[protein] + ATP = O-phospho-L-threonyl-[protein] + ADP + H(+). The polypeptide is Kinase and exchange factor for Rac A (kxcA) (Dictyostelium discoideum (Social amoeba)).